We begin with the raw amino-acid sequence, 369 residues long: sn-glycerol-3-phosphate import ATP-binding protein UgpC (369 aa).

The region spanning 4–235 (LSLRNVQKTY…PASTFVAGFI (232 aa)) is the ABC transporter domain. 37–44 (GPSGCGKS) is a binding site for ATP.

Belongs to the ABC transporter superfamily. sn-glycerol-3-phosphate importer (TC 3.A.1.1.3) family. As to quaternary structure, the complex is composed of two ATP-binding proteins (UgpC), two transmembrane proteins (UgpA and UgpE) and a solute-binding protein (UgpB).

The protein localises to the cell inner membrane. It catalyses the reaction sn-glycerol 3-phosphate(out) + ATP + H2O = sn-glycerol 3-phosphate(in) + ADP + phosphate + H(+). Its function is as follows. Part of the ABC transporter complex UgpBAEC involved in sn-glycerol-3-phosphate (G3P) import. Responsible for energy coupling to the transport system. The polypeptide is sn-glycerol-3-phosphate import ATP-binding protein UgpC (Cupriavidus pinatubonensis (strain JMP 134 / LMG 1197) (Cupriavidus necator (strain JMP 134))).